A 227-amino-acid chain; its full sequence is Lipoprotein-releasing system ATP-binding protein LolD (227 aa).

Residues 6–227 enclose the ABC transporter domain; that stretch reads LTSQKLYKSY…LHEGSLYARE (222 aa). ATP is bound at residue 42–49; it reads GPSGSGKS.

This sequence belongs to the ABC transporter superfamily. Lipoprotein translocase (TC 3.A.1.125) family. As to quaternary structure, the complex is composed of two ATP-binding proteins (LolD) and two transmembrane proteins (LolC and LolE).

The protein localises to the cell inner membrane. In terms of biological role, part of the ABC transporter complex LolCDE involved in the translocation of mature outer membrane-directed lipoproteins, from the inner membrane to the periplasmic chaperone, LolA. Responsible for the formation of the LolA-lipoprotein complex in an ATP-dependent manner. The sequence is that of Lipoprotein-releasing system ATP-binding protein LolD from Legionella pneumophila (strain Paris).